The following is an 854-amino-acid chain: MAIQTRFASGTSLSDLKPKPSATSISIPMQNVMNKPVTEQDSLFHICANIRKRLEVLPQLKPFLQLAYQSSEVLSERQSLLLSQKQHQELLKSNGANRDSSDLAPTLRSSSISTATSLMSMEGISYTNSNPSATPNMEDTLLTFSMGILPITMDCDPVTQLSQLFQQGAPLCILFNSVKPQFKLPVIASDDLKVCKKSIYDFILGCKKHFAFNDEELFTISDVFANSTSQLVKVLEVVETLMNSSPTIFPSKSKTQQIMNAENQHRHQPQQSSKKHNEYVKIIKEFVATERKYVHDLEILDKYRQQLLDSNLITSEELYMLFPNLGDAIDFQRRFLISLEINALVEPSKQRIGALFMHSKHFFKLYEPWSIGQNAAIEFLSSTLHKMRVDESQRFIINNKLELQSFLYKPVQRLCRYPLLVKELLAESSDDNNTKELEAALDISKNIARSINENQRRTENHQVVKKLYGRVVNWKGYRISKFGELLYFDKVFISTTNSSSEPEREFEVYLFEKIIILFSEVVTKKSASSLILKKKSSTSASISASNITDNNGSPHHSYHKRHSNSSSSNNIHLSSSSAAAIIHSSTNSSDNNSNNSSSSSLFKLSANEPKLDLRGRIMIMNLNQIIPQNNRSLNITWESIKEQGNFLLKFKNEETRDNWSSCLQQLIHDLKNEQFKARHHSSTSTTSSTAKSSSMMSPTTTMNTPNHHNSRQTHDSMASFSSSHMKRVSDVLPKRRTTSSSFESEIKSISENFKNSIPESSILFRISYNNNSNNTSSSEIFTLLVEKVWNFDDLIMAINSKISNTHNNNISPITKIKYQDEDGDFVVLGSDEDWNVAKEMLAENNEKFLNIRLY.

A compositionally biased stretch (polar residues) spans 1–14 (MAIQTRFASGTSLS). A disordered region spans residues 1–24 (MAIQTRFASGTSLSDLKPKPSATS). The Calponin-homology (CH) domain maps to 135–246 (PNMEDTLLTF…VVETLMNSSP (112 aa)). The region spanning 278-454 (EYVKIIKEFV…KNIARSINEN (177 aa)) is the DH domain. One can recognise a PH domain in the interval 478-668 (RISKFGELLY…WSSCLQQLIH (191 aa)). 2 disordered regions span residues 542 to 571 (ISAS…SNNI) and 674 to 745 (QFKA…FESE). Residues 682-707 (STSTTSSTAKSSSMMSPTTTMNTPNH) show a composition bias toward low complexity. In terms of domain architecture, PB1 spans 761–854 (SILFRISYNN…NEKFLNIRLY (94 aa)).

Interacts with AXL2.

Functionally, promotes the exchange of CDC42-bound GDP by GTP. Controls the polarity of calmodulin, and the calcium regulatory process of bud emergence. CDC24 may be involved in the initial selection and organization of the budding site. This Saccharomyces cerevisiae (strain ATCC 204508 / S288c) (Baker's yeast) protein is Cell division control protein 24 (CDC24).